A 617-amino-acid chain; its full sequence is Electron transfer flavoprotein-ubiquinone oxidoreductase, mitochondrial (617 aa).

The transit peptide at 1–33 (MLVPLAKLSCPAYQCFHALKIKKNYLPLCATRW) directs the protein to the mitochondrion. Residue 71-85 (VVIVGAGPAGLSAAV) participates in FAD binding. Lysine 96 bears the N6-acetyllysine mark. An intramembrane segment occupies 109–130 (IGAHTLSGACLDPGAFKELFPD). 2 positions are modified to N6-acetyllysine: lysine 132 and lysine 223. 2 residues coordinate a ubiquinone: glycine 305 and glycine 306. At lysine 357 the chain carries N6-acetyllysine. An intramembrane segment occupies 428 to 447 (MGLHVTEYEDNLKNSWVWKE). Serine 551 bears the Phosphoserine mark. Positions 561, 586, 589, and 592 each coordinate [4Fe-4S] cluster. The region spanning 577–606 (FRLQINAQNCVHCKTCDIKDPSQNINWVVP) is the 4Fe-4S ferredoxin-type domain.

It belongs to the ETF-QO/FixC family. As to quaternary structure, monomer. [4Fe-4S] cluster serves as cofactor. The cofactor is FAD.

Its subcellular location is the mitochondrion inner membrane. It carries out the reaction a ubiquinone + reduced [electron-transfer flavoprotein] = a ubiquinol + oxidized [electron-transfer flavoprotein] + H(+). Its function is as follows. Accepts electrons from ETF and reduces ubiquinone. The chain is Electron transfer flavoprotein-ubiquinone oxidoreductase, mitochondrial (ETFDH) from Pongo abelii (Sumatran orangutan).